Here is a 522-residue protein sequence, read N- to C-terminus: Glucans biosynthesis protein G (522 aa).

The N-terminal stretch at 1-33 (MPNNKFFVKSSKASLRWLGATVLLTLYALPSWA) is a signal peptide.

This sequence belongs to the OpgD/OpgG family.

It localises to the periplasm. It functions in the pathway glycan metabolism; osmoregulated periplasmic glucan (OPG) biosynthesis. Its function is as follows. Involved in the biosynthesis of osmoregulated periplasmic glucans (OPGs). This chain is Glucans biosynthesis protein G, found in Sodalis glossinidius (strain morsitans).